The primary structure comprises 230 residues: Large ribosomal subunit protein uL1 (230 aa).

This sequence belongs to the universal ribosomal protein uL1 family. Part of the 50S ribosomal subunit.

Functionally, binds directly to 23S rRNA. The L1 stalk is quite mobile in the ribosome, and is involved in E site tRNA release. Its function is as follows. Protein L1 is also a translational repressor protein, it controls the translation of the L11 operon by binding to its mRNA. This chain is Large ribosomal subunit protein uL1, found in Leptospira borgpetersenii serovar Hardjo-bovis (strain L550).